The primary structure comprises 153 residues: Transcriptional repressor NrdR (153 aa).

A zinc finger lies at 3-34 (CPFCGKENTRVIDSRPADDCSSIRRRRQCDEC). The 91-residue stretch at 49-139 (LVVIKKDNNR…VYREFKDVNT (91 aa)) folds into the ATP-cone domain.

It belongs to the NrdR family. It depends on Zn(2+) as a cofactor.

Functionally, negatively regulates transcription of bacterial ribonucleotide reductase nrd genes and operons by binding to NrdR-boxes. The protein is Transcriptional repressor NrdR of Lachnoclostridium phytofermentans (strain ATCC 700394 / DSM 18823 / ISDg) (Clostridium phytofermentans).